The following is a 638-amino-acid chain: 1-deoxy-D-xylulose-5-phosphate synthase (638 aa).

Thiamine diphosphate-binding positions include His76 and 117–119 (AHS). A Mg(2+)-binding site is contributed by Asp148. Thiamine diphosphate-binding positions include 149–150 (GS), Asn177, Tyr287, and Glu369. Residue Asn177 coordinates Mg(2+).

It belongs to the transketolase family. DXPS subfamily. Homodimer. Requires Mg(2+) as cofactor. Thiamine diphosphate serves as cofactor.

It carries out the reaction D-glyceraldehyde 3-phosphate + pyruvate + H(+) = 1-deoxy-D-xylulose 5-phosphate + CO2. It participates in metabolic intermediate biosynthesis; 1-deoxy-D-xylulose 5-phosphate biosynthesis; 1-deoxy-D-xylulose 5-phosphate from D-glyceraldehyde 3-phosphate and pyruvate: step 1/1. Functionally, catalyzes the acyloin condensation reaction between C atoms 2 and 3 of pyruvate and glyceraldehyde 3-phosphate to yield 1-deoxy-D-xylulose-5-phosphate (DXP). The polypeptide is 1-deoxy-D-xylulose-5-phosphate synthase (Rhodopseudomonas palustris (strain HaA2)).